Consider the following 393-residue polypeptide: Bifunctional enzyme Fae/Hps (393 aa).

The tract at residues 1–161 (MYLIGEALIG…HEKDRAAHAV (161 aa)) is formaldehyde-activating enzyme. The active-site Proton donor is His-17. Substrate contacts are provided by Asp-19, Leu-48, Lys-66, Thr-68, and Gln-83. Positions 162-393 (MGFKVPRLWD…IDQFRIMTDF (232 aa)) are 3-hexulose-6-phosphate synthase.

In the N-terminal section; belongs to the formaldehyde-activating enzyme family. It in the C-terminal section; belongs to the HPS/KGPDC family. HPS subfamily.

It carries out the reaction 5,6,7,8-tetrahydromethanopterin + formaldehyde = 5,10-methylenetetrahydromethanopterin + H2O. It catalyses the reaction D-ribulose 5-phosphate + formaldehyde = D-arabino-hex-3-ulose 6-phosphate. It participates in carbohydrate biosynthesis; D-ribose 5-phosphate biosynthesis. Its function is as follows. Catalyzes the condensation of formaldehyde with tetrahydromethanopterin (H(4)MPT) to 5,10-methylenetetrahydromethanopterin. Catalyzes the reversible formation of ribulose-5-phosphate and formaldehyde from 3-hexulose-6-phosphate. This chain is Bifunctional enzyme Fae/Hps, found in Methanospirillum hungatei JF-1 (strain ATCC 27890 / DSM 864 / NBRC 100397 / JF-1).